We begin with the raw amino-acid sequence, 167 residues long: uncharacterized protein (167 aa).

Positions 9-167 (PVMRRLTLQD…DCEVRMLREL (159 aa)) constitute an N-acetyltransferase domain.

This sequence belongs to the acetyltransferase family.

This is an uncharacterized protein from Escherichia coli (strain K12).